We begin with the raw amino-acid sequence, 155 residues long: Endoribonuclease YbeY (155 aa).

Positions 120, 124, and 130 each coordinate Zn(2+).

It belongs to the endoribonuclease YbeY family. Zn(2+) is required as a cofactor.

The protein resides in the cytoplasm. Single strand-specific metallo-endoribonuclease involved in late-stage 70S ribosome quality control and in maturation of the 3' terminus of the 16S rRNA. The protein is Endoribonuclease YbeY of Staphylococcus aureus (strain bovine RF122 / ET3-1).